The sequence spans 689 residues: Acyl-coenzyme A oxidase 1 (689 aa).

The FAD site is built by Thr-149 and Gly-188. Glu-444 acts as the Proton acceptor in catalysis.

The protein belongs to the acyl-CoA oxidase family. Heteropentamer composed of five different subunits. FAD is required as a cofactor.

The protein localises to the peroxisome. The enzyme catalyses a 2,3-saturated acyl-CoA + O2 = a (2E)-enoyl-CoA + H2O2. It participates in lipid metabolism; peroxisomal fatty acid beta-oxidation. In Yarrowia lipolytica (strain CLIB 122 / E 150) (Yeast), this protein is Acyl-coenzyme A oxidase 1 (POX1).